We begin with the raw amino-acid sequence, 476 residues long: 3-isopropylmalate dehydratase large subunit (476 aa).

[4Fe-4S] cluster is bound by residues cysteine 357, cysteine 417, and cysteine 420.

The protein belongs to the aconitase/IPM isomerase family. LeuC type 1 subfamily. As to quaternary structure, heterodimer of LeuC and LeuD. Requires [4Fe-4S] cluster as cofactor.

The catalysed reaction is (2R,3S)-3-isopropylmalate = (2S)-2-isopropylmalate. It participates in amino-acid biosynthesis; L-leucine biosynthesis; L-leucine from 3-methyl-2-oxobutanoate: step 2/4. Its function is as follows. Catalyzes the isomerization between 2-isopropylmalate and 3-isopropylmalate, via the formation of 2-isopropylmaleate. The polypeptide is 3-isopropylmalate dehydratase large subunit (Mycobacterium leprae (strain TN)).